A 198-amino-acid polypeptide reads, in one-letter code: Holliday junction branch migration complex subunit RuvA (198 aa).

The interval 1-63 (MYDYIKGQLT…EDAHLLFGFH (63 aa)) is domain I. Residues 64–142 (TEDEKDVFLK…EAPQETGHTK (79 aa)) are domain II. The segment at 143 to 147 (ARSNK) is flexible linker. The segment at 148–198 (AGNTQLDEAIEALLALGYTATELKKIRAFFEGTSETAEQYIKSALKLLMKG) is domain III.

The protein belongs to the RuvA family. As to quaternary structure, homotetramer. Forms an RuvA(8)-RuvB(12)-Holliday junction (HJ) complex. HJ DNA is sandwiched between 2 RuvA tetramers; dsDNA enters through RuvA and exits via RuvB. An RuvB hexamer assembles on each DNA strand where it exits the tetramer. Each RuvB hexamer is contacted by two RuvA subunits (via domain III) on 2 adjacent RuvB subunits; this complex drives branch migration. In the full resolvosome a probable DNA-RuvA(4)-RuvB(12)-RuvC(2) complex forms which resolves the HJ.

The protein localises to the cytoplasm. The RuvA-RuvB-RuvC complex processes Holliday junction (HJ) DNA during genetic recombination and DNA repair, while the RuvA-RuvB complex plays an important role in the rescue of blocked DNA replication forks via replication fork reversal (RFR). RuvA specifically binds to HJ cruciform DNA, conferring on it an open structure. The RuvB hexamer acts as an ATP-dependent pump, pulling dsDNA into and through the RuvAB complex. HJ branch migration allows RuvC to scan DNA until it finds its consensus sequence, where it cleaves and resolves the cruciform DNA. This Streptococcus pyogenes serotype M49 (strain NZ131) protein is Holliday junction branch migration complex subunit RuvA.